The chain runs to 333 residues: DNA-directed RNA polymerase subunit alpha (333 aa).

Positions 1 to 251 (MEKLTKIKHR…AHFQTIGDLT (251 aa)) are alpha N-terminal domain (alpha-NTD). Residues 272–333 (DMEIRLLNLS…KLNEYGKLKN (62 aa)) form an alpha C-terminal domain (alpha-CTD) region.

It belongs to the RNA polymerase alpha chain family. Homodimer. The RNAP catalytic core consists of 2 alpha, 1 beta, 1 beta' and 1 omega subunit. When a sigma factor is associated with the core the holoenzyme is formed, which can initiate transcription.

The enzyme catalyses RNA(n) + a ribonucleoside 5'-triphosphate = RNA(n+1) + diphosphate. Functionally, DNA-dependent RNA polymerase catalyzes the transcription of DNA into RNA using the four ribonucleoside triphosphates as substrates. The chain is DNA-directed RNA polymerase subunit alpha from Mycoplasmopsis synoviae (strain 53) (Mycoplasma synoviae).